We begin with the raw amino-acid sequence, 645 residues long: Translation factor GUF1 homolog, mitochondrial (645 aa).

One can recognise a tr-type G domain in the interval 40–215 (DKIRNFGIVA…AIIDRVPAPT (176 aa)). GTP-binding positions include 49–56 (AHVDHGKS), 108–112 (DTPGH), and 162–165 (NKID).

This sequence belongs to the TRAFAC class translation factor GTPase superfamily. Classic translation factor GTPase family. LepA subfamily.

It is found in the mitochondrion inner membrane. The enzyme catalyses GTP + H2O = GDP + phosphate + H(+). In terms of biological role, promotes mitochondrial protein synthesis. May act as a fidelity factor of the translation reaction, by catalyzing a one-codon backward translocation of tRNAs on improperly translocated ribosomes. Binds to mitochondrial ribosomes in a GTP-dependent manner. In Caenorhabditis elegans, this protein is Translation factor GUF1 homolog, mitochondrial.